We begin with the raw amino-acid sequence, 94 residues long: Large ribosomal subunit protein uL23 (94 aa).

This sequence belongs to the universal ribosomal protein uL23 family. Part of the 50S ribosomal subunit. Contacts protein L29, and trigger factor when it is bound to the ribosome.

Functionally, one of the early assembly proteins it binds 23S rRNA. One of the proteins that surrounds the polypeptide exit tunnel on the outside of the ribosome. Forms the main docking site for trigger factor binding to the ribosome. The chain is Large ribosomal subunit protein uL23 from Geobacter sulfurreducens (strain ATCC 51573 / DSM 12127 / PCA).